The chain runs to 170 residues: Universal stress protein MJ0531 (170 aa).

This sequence belongs to the universal stress protein A family.

This Methanocaldococcus jannaschii (strain ATCC 43067 / DSM 2661 / JAL-1 / JCM 10045 / NBRC 100440) (Methanococcus jannaschii) protein is Universal stress protein MJ0531.